Here is a 148-residue protein sequence, read N- to C-terminus: Transthyretin-like protein 2 (148 aa).

The first 17 residues, methionine 1–serine 17, serve as a signal peptide directing secretion. Asparagine 77 is a glycosylation site (N-linked (GlcNAc...) asparagine).

This sequence belongs to the nematode transthyretin-like family.

The protein resides in the secreted. This chain is Transthyretin-like protein 2 (ttr-2), found in Caenorhabditis elegans.